We begin with the raw amino-acid sequence, 111 residues long: Ribosome-binding factor A (111 aa).

It belongs to the RbfA family. As to quaternary structure, monomer. Binds 30S ribosomal subunits, but not 50S ribosomal subunits or 70S ribosomes.

Its subcellular location is the cytoplasm. Functionally, one of several proteins that assist in the late maturation steps of the functional core of the 30S ribosomal subunit. Associates with free 30S ribosomal subunits (but not with 30S subunits that are part of 70S ribosomes or polysomes). Required for efficient processing of 16S rRNA. May interact with the 5'-terminal helix region of 16S rRNA. The sequence is that of Ribosome-binding factor A from Helicobacter pylori (strain G27).